A 151-amino-acid polypeptide reads, in one-letter code: uncharacterized protein (151 aa).

The signal sequence occupies residues 1 to 32; that stretch reads MEEAEKAKRRSIELLNETRNCAYSSFVALAEA. Residues 45-67 traverse the membrane as a helical segment; it reads AIGFAGGISGSGHICGALWGSIA.

The protein localises to the membrane. This is an uncharacterized protein from Archaeoglobus fulgidus (strain ATCC 49558 / DSM 4304 / JCM 9628 / NBRC 100126 / VC-16).